A 1940-amino-acid polypeptide reads, in one-letter code: Rho GTPase-activating protein 32 (1940 aa).

Residues 154 to 248 enclose the PX; atypical domain; the sequence is SKELVFLVQI…LTWMEIDNKG (95 aa). The SH3 domain occupies 262-324; it reads PAIAAAHVIK…PSECVELIND (63 aa). The region spanning 375-570 is the Rho-GAP domain; that stretch reads CDLGEHLLNS…FILNHVEVLF (196 aa). Disordered stretches follow at residues 646–746, 1035–1163, 1219–1264, 1430–1454, and 1675–1786; these read FPSE…LSAS, RANQ…FSVT, FTTG…PPVR, KHPR…YTED, and RSRS…HSSA. The span at 1047–1061 shows a compositional bias: polar residues; it reads PQGASASESPQELSH. Composition is skewed to low complexity over residues 1081–1094 and 1145–1163; these read LALA…QASA and SRKT…FSVT. A compositionally biased stretch (basic and acidic residues) spans 1691-1707; the sequence is ETKDVRYPGRTEGDERT. Over residues 1725-1734 the composition is skewed to polar residues; the sequence is PQKQSGSSRS. The segment covering 1736–1755 has biased composition (basic and acidic residues); the sequence is MQHDISTEQHSQDTLHRQPS.

Belongs to the PX domain-containing GAP family.

The protein localises to the cytoplasm. It localises to the membrane. Its subcellular location is the cell membrane. In terms of biological role, GTPase-activating protein (GAP) promoting GTP hydrolysis on RHOA, CDC42 and RAC1 small GTPases. This chain is Rho GTPase-activating protein 32 (arhgap32), found in Xenopus laevis (African clawed frog).